We begin with the raw amino-acid sequence, 323 residues long: MIEFGNFYQLIAKNHLSHWLETLPAQIASWQREQQHGLFKQWSNAVEFLPEMTPWRLDLLHSVTAESETPLSEGQLKRIDTLLRNLMPWRKGPFSLYGVDIDTEWRSDWKWDRVLPHLSDLTGRTILDVGCGSGYHLWRMIGAGAHLAVGIDPTQLFLCQFEAVRKLLGNDQRAHLLPLGIEQLPALKAFDTVFSMGVLYHRRSPLEHLWQLKDQLVNEGELVLETLVIDGDENTVLVPGDRYAQMRNVYFIPSAPALKKWLEKCGFIDVRIADVCVTTTEEQRRTEWMVTESLADFLDPNDRSKTVEGYPAPQRAVLIARKP.

Carboxy-S-adenosyl-L-methionine contacts are provided by residues Lys-91, Trp-105, Lys-110, Gly-130, 152-154 (DPT), 181-182 (IE), Met-196, Tyr-200, and Arg-315.

The protein belongs to the class I-like SAM-binding methyltransferase superfamily. CmoB family. As to quaternary structure, homotetramer.

It carries out the reaction carboxy-S-adenosyl-L-methionine + 5-hydroxyuridine(34) in tRNA = 5-carboxymethoxyuridine(34) in tRNA + S-adenosyl-L-homocysteine + H(+). Functionally, catalyzes carboxymethyl transfer from carboxy-S-adenosyl-L-methionine (Cx-SAM) to 5-hydroxyuridine (ho5U) to form 5-carboxymethoxyuridine (cmo5U) at position 34 in tRNAs. This chain is tRNA U34 carboxymethyltransferase, found in Salmonella typhimurium (strain LT2 / SGSC1412 / ATCC 700720).